Here is a 71-residue protein sequence, read N- to C-terminus: Non-structural protein 3x (71 aa).

The protein is Non-structural protein 3x of Canis lupus familiaris (Dog).